Reading from the N-terminus, the 631-residue chain is Cyclic nucleotide-gated channel alpha-3 (631 aa).

The span at 1-18 (MAKVNTQCSQPSPTQLSI) shows a compositional bias: polar residues. 2 disordered regions span residues 1 to 21 (MAKVNTQCSQPSPTQLSIKNA) and 71 to 98 (EVSTRESNAQPNPGEQKPPDGGEGRKEE). At 1-111 (MAKVNTQCSQ…VDPSSNIYYR (111 aa)) the chain is on the cytoplasmic side. The segment covering 87-98 (KPPDGGEGRKEE) has biased composition (basic and acidic residues). Residues 112 to 133 (WLTAIALPVFYNWCLLVCRACF) traverse the membrane as a helical segment. The Extracellular segment spans residues 134–139 (DELQSE). The helical transmembrane segment at 140–160 (HLTLWLVLDYSADVLYVLDML) threads the bilayer. Over 161-187 (VRARTGFLEQGLMVRDTKRLWKHYTKT) the chain is Cytoplasmic. A helical transmembrane segment spans residues 188 to 207 (LHFKLDILSLIPTDLAYLKL). The Extracellular segment spans residues 208 to 211 (GVNY). The chain crosses the membrane as a helical span at residues 212 to 229 (PELRFNRLLKFSRLFEFF). Residues 230–239 (DRTETRTNYP) are Cytoplasmic-facing. An ion conduction pathway region spans residues 239 to 347 (PNVFRIGNLV…GNVGSMISNM (109 aa)). Residues 240 to 262 (NVFRIGNLVLYTLIIIHWNACIY) form a helical membrane-spanning segment. The Extracellular segment spans residues 263-288 (FAISKFIGFGTDSWVYPNTSKPEYAR). The N-linked (GalNAc...) asparagine glycan is linked to asparagine 280. The next 2 membrane-spanning stretches (helical) occupy residues 289–319 (LSRKYIYSLYWSTLTLTTIGETPPPVKDEEY) and 320–344 (LFVVIDFLVGILIFATIVGNVGSMI). The tract at residues 306–309 (TIGE) is selectivity filter. Residues 345-631 (SNMNAPRVEF…ENSEDASKTD (287 aa)) lie on the Cytoplasmic side of the membrane. Residues 349-426 (APRVEFQAKI…TLKKVRIFQD (78 aa)) form a C-linker region. The tract at residues 429–549 (AGLLVELVLK…EEKGRQILMK (121 aa)) is cyclic nucleotide-binding domain. Positions 489, 490, 492, 505, 506, and 550 each coordinate 3',5'-cyclic GMP. A coiled-coil region spans residues 567-610 (VEEKVEYLESSLDILQTRFARLLAEYSASQMKLKQRLTRLESQM).

The protein belongs to the cyclic nucleotide-gated cation channel (TC 1.A.1.5) family. CNGA3 subfamily. In terms of assembly, forms heterotetrameric channels composed of CNGA3 and CNGB3 subunits with 3:1 stoichiometry. Prominently expressed in retina.

Its subcellular location is the cell membrane. The catalysed reaction is Ca(2+)(in) = Ca(2+)(out). It carries out the reaction Na(+)(in) = Na(+)(out). It catalyses the reaction K(+)(in) = K(+)(out). The enzyme catalyses NH4(+)(in) = NH4(+)(out). The catalysed reaction is Rb(+)(in) = Rb(+)(out). It carries out the reaction Li(+)(in) = Li(+)(out). It catalyses the reaction Cs(+)(in) = Cs(+)(out). Functionally, pore-forming subunit of the cone cyclic nucleotide-gated channel. Mediates cone photoresponses at bright light converting transient changes in intracellular cGMP levels into electrical signals. In the dark, cGMP levels are high and keep the channel open enabling a steady inward current carried by Na(+) and Ca(2+) ions that leads to membrane depolarization and neurotransmitter release from synaptic terminals. Upon photon absorption cGMP levels decline leading to channel closure and membrane hyperpolarization that ultimately slows neurotransmitter release and signals the presence of light, the end point of the phototransduction cascade. Pore-forming subunit of the gustatory cyclic nucleotide-gated channel. In the taste buds, may sense oral extracellular pH and conduct ion currents that modulate the excitability of taste cells. Conducts cGMP- and cAMP-gated ion currents, with permeability for monovalent and divalent cations. In Mus musculus (Mouse), this protein is Cyclic nucleotide-gated channel alpha-3.